The chain runs to 263 residues: Endonuclease 8 (263 aa).

Proline 2 functions as the Schiff-base intermediate with DNA in the catalytic mechanism. Catalysis depends on glutamate 3, which acts as the Proton donor. Lysine 53 serves as the catalytic Proton donor; for beta-elimination activity. Positions 70, 125, and 169 each coordinate DNA. The segment at 229 to 263 (KVFHRDGEACERCGGIIEKTTLSSRPFYWCPHCQK) adopts an FPG-type zinc-finger fold. The Proton donor; for delta-elimination activity role is filled by arginine 253.

Belongs to the FPG family. Zn(2+) serves as cofactor.

The catalysed reaction is 2'-deoxyribonucleotide-(2'-deoxyribose 5'-phosphate)-2'-deoxyribonucleotide-DNA = a 3'-end 2'-deoxyribonucleotide-(2,3-dehydro-2,3-deoxyribose 5'-phosphate)-DNA + a 5'-end 5'-phospho-2'-deoxyribonucleoside-DNA + H(+). Its function is as follows. Involved in base excision repair of DNA damaged by oxidation or by mutagenic agents. Acts as a DNA glycosylase that recognizes and removes damaged bases. Has a preference for oxidized pyrimidines, such as thymine glycol, 5,6-dihydrouracil and 5,6-dihydrothymine. Has AP (apurinic/apyrimidinic) lyase activity and introduces nicks in the DNA strand. Cleaves the DNA backbone by beta-delta elimination to generate a single-strand break at the site of the removed base with both 3'- and 5'-phosphates. The protein is Endonuclease 8 of Salmonella heidelberg (strain SL476).